A 247-amino-acid polypeptide reads, in one-letter code: MVWQRPDGRKPYELRPINFHTKFTRFAPGSVLTICGETKVLCTVSVAESVPKFLTGSGKGWLTAEYRMLPSATQQRHERELLKLSGRTQEIQRLIGRSLRAALDFEALGERTLTVDADVLQADAGTRTAAITGGFVALAEAISQLLQRGVLERSPLCGQIAAVSVGLLEQEAYLDLNYIEDVAATVDFNVVMNKNLGIIEVQGTAEEGSFSRTQLNQLLDCAETGIQQLLIAQQQAITDWDRLFVGK.

Residues Arg87 and 125-127 (GTR) contribute to the phosphate site.

Belongs to the RNase PH family. Homohexameric ring arranged as a trimer of dimers.

The enzyme catalyses tRNA(n+1) + phosphate = tRNA(n) + a ribonucleoside 5'-diphosphate. In terms of biological role, phosphorolytic 3'-5' exoribonuclease that plays an important role in tRNA 3'-end maturation. Removes nucleotide residues following the 3'-CCA terminus of tRNAs; can also add nucleotides to the ends of RNA molecules by using nucleoside diphosphates as substrates, but this may not be physiologically important. Probably plays a role in initiation of 16S rRNA degradation (leading to ribosome degradation) during starvation. This is Ribonuclease PH from Nostoc sp. (strain PCC 7120 / SAG 25.82 / UTEX 2576).